The sequence spans 160 residues: Crossover junction endodeoxyribonuclease RuvC (160 aa).

Active-site residues include aspartate 9, glutamate 68, and aspartate 141. Mg(2+) is bound by residues aspartate 9, glutamate 68, and aspartate 141.

Belongs to the RuvC family. As to quaternary structure, homodimer which binds Holliday junction (HJ) DNA. The HJ becomes 2-fold symmetrical on binding to RuvC with unstacked arms; it has a different conformation from HJ DNA in complex with RuvA. In the full resolvosome a probable DNA-RuvA(4)-RuvB(12)-RuvC(2) complex forms which resolves the HJ. Mg(2+) serves as cofactor.

Its subcellular location is the cytoplasm. The enzyme catalyses Endonucleolytic cleavage at a junction such as a reciprocal single-stranded crossover between two homologous DNA duplexes (Holliday junction).. Its function is as follows. The RuvA-RuvB-RuvC complex processes Holliday junction (HJ) DNA during genetic recombination and DNA repair. Endonuclease that resolves HJ intermediates. Cleaves cruciform DNA by making single-stranded nicks across the HJ at symmetrical positions within the homologous arms, yielding a 5'-phosphate and a 3'-hydroxyl group; requires a central core of homology in the junction. The consensus cleavage sequence is 5'-(A/T)TT(C/G)-3'. Cleavage occurs on the 3'-side of the TT dinucleotide at the point of strand exchange. HJ branch migration catalyzed by RuvA-RuvB allows RuvC to scan DNA until it finds its consensus sequence, where it cleaves and resolves the cruciform DNA. The chain is Crossover junction endodeoxyribonuclease RuvC from Campylobacter jejuni (strain RM1221).